Here is a 20-residue protein sequence, read N- to C-terminus: GVLFASGQNLARTLIEFLLR.

Phosphoserine is present on S6.

Belongs to the peptidase M17 family. In terms of assembly, homohexamer. The cofactor is Zn(2+). Requires Mn(2+) as cofactor.

The protein localises to the cytoplasm. It carries out the reaction Release of an N-terminal amino acid, Xaa-|-Yaa-, in which Xaa is preferably Leu, but may be other amino acids including Pro although not Arg or Lys, and Yaa may be Pro. Amino acid amides and methyl esters are also readily hydrolyzed, but rates on arylamides are exceedingly low.. It catalyses the reaction an S-substituted L-cysteinylglycine + H2O = an S-substituted L-cysteine + glycine. The catalysed reaction is L-cysteinylglycine + H2O = L-cysteine + glycine. The enzyme catalyses S-benzyl-L-cysteinylglycine + H2O = S-benzyl-L-cysteine + glycine. It carries out the reaction Release of N-terminal proline from a peptide.. Cytosolic metallopeptidase that catalyzes the removal of unsubstituted N-terminal hydrophobic amino acids from various peptides. The presence of Zn(2+) ions is essential for the peptidase activity, and the association with other cofactors can modulate the substrate spectificity of the enzyme. For instance, in the presence of Mn(2+), it displays a specific Cys-Gly hydrolyzing activity of Cys-Gly-S-conjugates. Involved in the metabolism of glutathione and in the degradation of glutathione S-conjugates, which may play a role in the control of the cell redox status. The sequence is that of Cytosol aminopeptidase from Mesocricetus auratus (Golden hamster).